A 216-amino-acid chain; its full sequence is Redox-sensing transcriptional repressor Rex (216 aa).

A DNA-binding region (H-T-H motif) is located at residues Q20–F59. G94–G99 is a binding site for NAD(+).

This sequence belongs to the transcriptional regulatory Rex family. Homodimer.

It localises to the cytoplasm. Modulates transcription in response to changes in cellular NADH/NAD(+) redox state. The protein is Redox-sensing transcriptional repressor Rex of Lactococcus lactis subsp. cremoris (Streptococcus cremoris).